A 281-amino-acid chain; its full sequence is 2,3,4,5-tetrahydropyridine-2,6-dicarboxylate N-succinyltransferase (281 aa).

This sequence belongs to the transferase hexapeptide repeat family.

Its subcellular location is the cytoplasm. The enzyme catalyses (S)-2,3,4,5-tetrahydrodipicolinate + succinyl-CoA + H2O = (S)-2-succinylamino-6-oxoheptanedioate + CoA. The protein operates within amino-acid biosynthesis; L-lysine biosynthesis via DAP pathway; LL-2,6-diaminopimelate from (S)-tetrahydrodipicolinate (succinylase route): step 1/3. The polypeptide is 2,3,4,5-tetrahydropyridine-2,6-dicarboxylate N-succinyltransferase (Methylobacterium sp. (strain 4-46)).